We begin with the raw amino-acid sequence, 157 residues long: SsrA-binding protein (157 aa).

Residues 132–157 (EHDKRDTIKEREGKREVERAMKSRHR) are disordered.

The protein belongs to the SmpB family.

The protein resides in the cytoplasm. Required for rescue of stalled ribosomes mediated by trans-translation. Binds to transfer-messenger RNA (tmRNA), required for stable association of tmRNA with ribosomes. tmRNA and SmpB together mimic tRNA shape, replacing the anticodon stem-loop with SmpB. tmRNA is encoded by the ssrA gene; the 2 termini fold to resemble tRNA(Ala) and it encodes a 'tag peptide', a short internal open reading frame. During trans-translation Ala-aminoacylated tmRNA acts like a tRNA, entering the A-site of stalled ribosomes, displacing the stalled mRNA. The ribosome then switches to translate the ORF on the tmRNA; the nascent peptide is terminated with the 'tag peptide' encoded by the tmRNA and targeted for degradation. The ribosome is freed to recommence translation, which seems to be the essential function of trans-translation. The protein is SsrA-binding protein of Paracidovorax citrulli (strain AAC00-1) (Acidovorax citrulli).